Consider the following 446-residue polypeptide: MAQLTALDAGFLKSRDPERHPGLAIGAVAVVNGAAPSYDQLKTVLTERIKSIPRCTQVLATEWIDYPGFDLTQHVRRVALPRPGDEAELFRAIALALERPLDPDRPLWECWIIEGLNGNRWAILIKIHHCMAGAMSAAHLLARLCDDADGSAFANNVDIKQIPPYGDARSWAETLWRMSVSIAGAVCTAAARAVSWPAVTSPAGPVTTRRRYQAVRVPRDAVDAVCHKFGVTANDVALAAITEGFRTVLLHRGQQPRADSLRTLEKTDGSSAMLPYLPVEYDDPVRRLRTVHNRSQQSGRRQPDSLSDYTPLMLCAKMIHALARLPQQGIVTLATSAPRPRHQLRLMGQKMDQVLPIPPTALQLSTGIAVLSYGDELVFGITADYDAASEMQQLVNGIELGMARLVALSDDSVLLFTKDRRKASSRALPSAARRGRPSVPTARARH.

Residue His-129 is the Proton acceptor of the active site. Residues 425–446 (SRALPSAARRGRPSVPTARARH) are disordered.

This sequence belongs to the long-chain O-acyltransferase family.

It carries out the reaction an acyl-CoA + a 1,2-diacyl-sn-glycerol = a triacyl-sn-glycerol + CoA. The protein operates within glycerolipid metabolism; triacylglycerol biosynthesis. The chain is Putative diacyglycerol O-acyltransferase MT3481 from Mycobacterium tuberculosis (strain CDC 1551 / Oshkosh).